We begin with the raw amino-acid sequence, 483 residues long: Arginine/agmatine antiporter (483 aa).

A run of 12 helical transmembrane segments spans residues 11 to 33, 48 to 70, 90 to 112, 127 to 149, 156 to 178, 209 to 228, 241 to 263, 293 to 315, 335 to 357, 367 to 389, 415 to 435, and 458 to 477; these read ILGTLALTGIVISYMIGGGIFSL, LAWMLSGIGIFFIANTFKTLSII, VGFTIAWGYWLCQIFGNVGYAVI, GGNTIPAILLGSLLIWIFNYIVL, SFVNIIGVVCTLIPLLLFILITA, TMLVTLWAFIGIEGAVVISG, ILGFSGCLLIYVLLSLLPFGSLF, TGLLIAVLTSWLSWTILASEIPY, APSFSLFMTSGLMQITMLLVYFS, ITGVMVLPAYLTSSLFLVKFSLS, LWLIYAGGLQHLFMVAILLAL, and EILKMTIMALAALLAIFLFS.

It belongs to the amino acid-polyamine-organocation (APC) superfamily. Basic amino acid/polyamine antiporter (APA) (TC 2.A.3.2) family.

The protein localises to the cell inner membrane. Its function is as follows. Catalyzes the exchange of L-arginine for agmatine. The arginine uptake by the bacterium in the macrophage may be a virulence factor against the host innate immune response. The sequence is that of Arginine/agmatine antiporter (aaxC) from Chlamydia trachomatis serovar L2 (strain ATCC VR-902B / DSM 19102 / 434/Bu).